The chain runs to 1002 residues: Probable transport protein MmpL10 (1002 aa).

Helical transmembrane passes span 1-21 (MVGC…SLAE), 177-197 (IAVM…TMLL), 199-219 (LVTI…VSLV), 228-248 (AIVL…VFLI), 268-288 (AMMS…ITFL), 306-326 (AIGI…ILVL), 358-378 (YLGA…LAHF), 806-826 (IVAV…RAIV), 835-855 (VVIS…VFLG), 862-882 (VPGL…MLLA), 901-921 (VRCT…SMSG), and 923-943 (LFSS…GILI).

The protein belongs to the resistance-nodulation-cell division (RND) (TC 2.A.6) family. MmpL subfamily.

Its subcellular location is the cell membrane. This chain is Probable transport protein MmpL10 (mmpL10), found in Mycobacterium bovis (strain ATCC BAA-935 / AF2122/97).